The chain runs to 753 residues: MTILNHTLGFPRVGLRRELKKAQESYWAGNSTREELLAVGRELRARHWDQQKQAGIDLLPVGDFAWYDHVLTTSLLLGNVPARHQNKDGSVDIDTLFRIGRGRAPTGEPAAAAEMTKWFNTNYHYMVPEFVKGQQFKLTWTQLLDEVDEALALGHKVKPVLLGPITWLWLGKVKGEQFDRLSLLNDILPVYQQVLAELAKRGIEWVQIDEPALVLELPQAWLDAYKPAYDALQGQVKLLLTTYFEGVTPNLDTITALPVQGLHVDLVHGKDDVVELHKRLPSDWLLSAGLINGRNVWRADLTEKYVQIKDIVGKRDLWVASSCSLLHSPIDLSVETRLDAEVKSWFAFALQKCHELALLRDALNSGDTAALAEWSAPIQARRHSTRVHNPAVEKRLAAITAQDSQRANVYEVRAEAQRARFKLPAWPTTTIGSFPQTTEIRTLRLDFKKGNLDANNYRTGIAEHIRQAIVEQERLGLDVLVHGEAERNDMVEYFGEHLDGFVFTQNGWVQSYGSRCVKPPIVIGDVSRPAPITVEWAKYAQSMTDKPVKGMLTGPVTILCWSFPREDVSRETIAKQIALALRDEVADLEAAGIGIIQIDEPALREGLPLRRSDWDAYLQWGVEAFRINAAVAKDDTQIHTHMCYCEFNDIMDSIAALDADVITIETSRSDMELLESFEEFDYPNEIGPGVYDIHSPNVPSVEWIEALLKKAAKRIPAERLWVNPDCGLKTRGWPETRAALANMVQAAQNLRRG.

5-methyltetrahydropteroyltri-L-glutamate-binding positions include 17-20 and lysine 117; that span reads RELK. Residues 431 to 433 and glutamate 484 contribute to the L-homocysteine site; that span reads IGS. Residues 431–433 and glutamate 484 each bind L-methionine; that span reads IGS. Residues 515 to 516 and tryptophan 561 each bind 5-methyltetrahydropteroyltri-L-glutamate; that span reads RC. Aspartate 599 lines the L-homocysteine pocket. L-methionine is bound at residue aspartate 599. A 5-methyltetrahydropteroyltri-L-glutamate-binding site is contributed by glutamate 605. Zn(2+)-binding residues include histidine 641, cysteine 643, and glutamate 665. Histidine 694 serves as the catalytic Proton donor. Cysteine 726 serves as a coordination point for Zn(2+).

Belongs to the vitamin-B12 independent methionine synthase family. Zn(2+) serves as cofactor.

It carries out the reaction 5-methyltetrahydropteroyltri-L-glutamate + L-homocysteine = tetrahydropteroyltri-L-glutamate + L-methionine. It participates in amino-acid biosynthesis; L-methionine biosynthesis via de novo pathway; L-methionine from L-homocysteine (MetE route): step 1/1. Catalyzes the transfer of a methyl group from 5-methyltetrahydrofolate to homocysteine resulting in methionine formation. The polypeptide is 5-methyltetrahydropteroyltriglutamate--homocysteine methyltransferase (Escherichia coli O157:H7 (strain EC4115 / EHEC)).